Consider the following 131-residue polypeptide: Phosphoribosyl-AMP cyclohydrolase (131 aa).

Aspartate 80 provides a ligand contact to Mg(2+). A Zn(2+)-binding site is contributed by cysteine 81. Mg(2+) is bound by residues aspartate 82 and aspartate 84. The Zn(2+) site is built by cysteine 98 and cysteine 105.

It belongs to the PRA-CH family. Homodimer. It depends on Mg(2+) as a cofactor. The cofactor is Zn(2+).

The protein localises to the cytoplasm. It carries out the reaction 1-(5-phospho-beta-D-ribosyl)-5'-AMP + H2O = 1-(5-phospho-beta-D-ribosyl)-5-[(5-phospho-beta-D-ribosylamino)methylideneamino]imidazole-4-carboxamide. The protein operates within amino-acid biosynthesis; L-histidine biosynthesis; L-histidine from 5-phospho-alpha-D-ribose 1-diphosphate: step 3/9. In terms of biological role, catalyzes the hydrolysis of the adenine ring of phosphoribosyl-AMP. This Azoarcus sp. (strain BH72) protein is Phosphoribosyl-AMP cyclohydrolase.